The following is a 714-amino-acid chain: Polyribonucleotide nucleotidyltransferase (714 aa).

The Mg(2+) site is built by Asp-493 and Asp-499. Positions 559-618 (PRIETTKIPADRIGELIGPGGKNIKAIQAESGADINIEEDGTVHIYAAKQEGLDRALELV) constitute a KH domain. Residues 628-696 (GELYTGKIVS…DKGRVKMSIR (69 aa)) form the S1 motif domain.

The protein belongs to the polyribonucleotide nucleotidyltransferase family. Mg(2+) serves as cofactor.

Its subcellular location is the cytoplasm. It catalyses the reaction RNA(n+1) + phosphate = RNA(n) + a ribonucleoside 5'-diphosphate. Its function is as follows. Involved in mRNA degradation. Catalyzes the phosphorolysis of single-stranded polyribonucleotides processively in the 3'- to 5'-direction. The protein is Polyribonucleotide nucleotidyltransferase of Akkermansia muciniphila (strain ATCC BAA-835 / DSM 22959 / JCM 33894 / BCRC 81048 / CCUG 64013 / CIP 107961 / Muc).